The chain runs to 1176 residues: Condensin complex subunit 1 (1176 aa).

Residues S464 and S475 each carry the phosphoserine modification.

Belongs to the CND1 (condensin subunit 1) family. In terms of assembly, component of the condensin complex, which contains the SMC2 and SMC4 heterodimer, and three non SMC subunits that probably regulate the complex: BRN1, YCS4 and YCG1/YCS5.

Its subcellular location is the nucleus. It localises to the chromosome. Regulatory subunit of the condensin complex, a complex required for conversion of interphase chromatin into mitotic-like condense chromosomes. The condensin complex probably introduces positive supercoils into relaxed DNA in the presence of type I topoisomerases and converts nicked DNA into positive knotted forms in the presence of type II topoisomerases. The condensin complex probably also plays a role during interphase. This is Condensin complex subunit 1 (YCS4) from Saccharomyces cerevisiae (strain ATCC 204508 / S288c) (Baker's yeast).